The sequence spans 470 residues: Uronate isomerase (470 aa).

It belongs to the metallo-dependent hydrolases superfamily. Uronate isomerase family.

The catalysed reaction is D-glucuronate = D-fructuronate. The enzyme catalyses aldehydo-D-galacturonate = keto-D-tagaturonate. It functions in the pathway carbohydrate metabolism; pentose and glucuronate interconversion. The protein is Uronate isomerase of Serratia proteamaculans (strain 568).